The following is a 274-amino-acid chain: Shikimate dehydrogenase (NADP(+)) (274 aa).

Shikimate contacts are provided by residues 14–16 (SKS) and Thr-60. Lys-64 serves as the catalytic Proton acceptor. Residue Glu-76 participates in NADP(+) binding. Shikimate is bound by residues Asn-85 and Asp-101. Residues 126 to 130 (GAGGA), 150 to 155 (NRTARK), and Met-214 each bind NADP(+). Position 216 (Tyr-216) interacts with shikimate. Gly-238 contacts NADP(+).

Belongs to the shikimate dehydrogenase family. In terms of assembly, homodimer.

It catalyses the reaction shikimate + NADP(+) = 3-dehydroshikimate + NADPH + H(+). Its pathway is metabolic intermediate biosynthesis; chorismate biosynthesis; chorismate from D-erythrose 4-phosphate and phosphoenolpyruvate: step 4/7. In terms of biological role, involved in the biosynthesis of the chorismate, which leads to the biosynthesis of aromatic amino acids. Catalyzes the reversible NADPH linked reduction of 3-dehydroshikimate (DHSA) to yield shikimate (SA). This is Shikimate dehydrogenase (NADP(+)) from Pseudomonas aeruginosa (strain ATCC 15692 / DSM 22644 / CIP 104116 / JCM 14847 / LMG 12228 / 1C / PRS 101 / PAO1).